The following is a 185-amino-acid chain: uncharacterized protein (185 aa).

The N-terminal stretch at 1–29 (MKNQEIIEVKSKMFLRIWAFVGSAGMGLA) is a signal peptide. A lipid anchor (N-palmitoyl cysteine) is attached at cysteine 30. The S-diacylglycerol cysteine moiety is linked to residue cysteine 30. The chain crosses the membrane as a helical span at residues 45–67 (YLLAIPAGFLFTLFCLYLFIIFF).

This sequence to B.subtilis YfjE.

It localises to the cell membrane. This is an uncharacterized protein from Bacillus subtilis (strain 168).